The following is a 328-amino-acid chain: Serine/threonine protein kinase RdoA (328 aa).

Residue D201 is the Proton acceptor of the active site. The Mg(2+) site is built by N206 and D217. D217 is an active-site residue.

It belongs to the SrkA/RdoA protein kinase family. Monomer. The cofactor is Mg(2+).

It localises to the cytoplasm. The catalysed reaction is L-seryl-[protein] + ATP = O-phospho-L-seryl-[protein] + ADP + H(+). It catalyses the reaction L-threonyl-[protein] + ATP = O-phospho-L-threonyl-[protein] + ADP + H(+). Functionally, a protein kinase that (auto)phosphorylates on Ser and Thr residues, probably involved in the extracytoplasmic stress response. Probably acts to suppress the effects of stress linked to accumulation of reactive oxygen species. In Salmonella typhimurium (strain LT2 / SGSC1412 / ATCC 700720), this protein is Serine/threonine protein kinase RdoA.